The chain runs to 487 residues: NADH-quinone oxidoreductase subunit N (487 aa).

13 helical membrane-spanning segments follow: residues 7–27, 38–58, 79–99, 111–131, 164–184, 207–227, 238–258, 276–296, 301–321, 328–348, 373–393, 406–426, and 451–471; these read ILGP…LLMV, LVGL…GLGA, YAKA…MVWL, ILVL…DLIA, FVLG…VYGF, LLIG…AVPF, APTP…LTLF, VIIL…IVQT, LMAY…AAGT, VLVY…VILA, AAAM…AGFF, GLFA…FYYL, and VILI…SVVV.

The protein belongs to the complex I subunit 2 family. NDH-1 is composed of 14 different subunits. Subunits NuoA, H, J, K, L, M, N constitute the membrane sector of the complex.

It is found in the cell inner membrane. The catalysed reaction is a quinone + NADH + 5 H(+)(in) = a quinol + NAD(+) + 4 H(+)(out). Functionally, NDH-1 shuttles electrons from NADH, via FMN and iron-sulfur (Fe-S) centers, to quinones in the respiratory chain. The immediate electron acceptor for the enzyme in this species is believed to be ubiquinone. Couples the redox reaction to proton translocation (for every two electrons transferred, four hydrogen ions are translocated across the cytoplasmic membrane), and thus conserves the redox energy in a proton gradient. This is NADH-quinone oxidoreductase subunit N from Rhodospirillum rubrum (strain ATCC 11170 / ATH 1.1.1 / DSM 467 / LMG 4362 / NCIMB 8255 / S1).